Reading from the N-terminus, the 654-residue chain is Protein fem-1 homolog A-A (654 aa).

ANK repeat units lie at residues Asp2–Leu31, Gly40–Ala70, Glu82–Arg111, Thr115–Val145, His149–Arg178, Lys182–Arg211, and Tyr214–Gln243. Ser108 carries the phosphoserine modification. The interval Glu242–Pro265 is disordered. Residues Gly253–Ser263 show a composition bias toward polar residues. TPR repeat units lie at residues Val283 to Gly317 and Ser375 to Asn408. ANK repeat units lie at residues Asn519 to Ser561 and Asp565 to Ala594. Ser608 bears the Phosphoserine mark.

The protein belongs to the fem-1 family. In terms of assembly, component of a CRL2 E3 ubiquitin-protein ligase complex, also named ECS (Elongin BC-CUL2/5-SOCS-box protein) complex, composed of CUL2, Elongin BC (ELOB and ELOC), RBX1 and substrate-specific adapter FEM1A. Interacts with PTGER4. Interacts with NFKB1; the interaction is direct. In terms of processing, phosphorylated; highly phosphorylated in myoblasts and myotubes. Phosphorylation at Ser-108 and Ser-608 promote PGE2-EP4-mediated inhibition of inflammation. Dephosphorylated by protein phosphatase 2A (PP2A). Preferentially expressed in cardiac muscle, brain and liver (at protein level). Also expressed in skeletal muscle.

The protein localises to the mitochondrion. It localises to the cytoplasm. It participates in protein modification; protein ubiquitination. Substrate-recognition component of a Cul2-RING (CRL2) E3 ubiquitin-protein ligase complex of the DesCEND (destruction via C-end degrons) pathway, which recognizes a C-degron located at the extreme C terminus of target proteins, leading to their ubiquitination and degradation. The C-degron recognized by the DesCEND pathway is usually a motif of less than ten residues and can be present in full-length proteins, truncated proteins or proteolytically cleaved forms. The CRL2(FEM1A) complex specifically recognizes proteins with an arginine at the C-terminus: recognizes and binds proteins ending with -Lys/Arg-Xaa-Arg and -Lys/Arg-Xaa-Xaa-Arg C-degrons, such as SIL1 or OR51B2, leading to their ubiquitination and degradation. Involved in PGE2-EP4-mediated inhibition of inflammation of macrophages via interaction with NFKB1 and PTGER4. Promotes inflammation in brain microglia through MAP2K4/MKK4-mediated signaling. This is Protein fem-1 homolog A-A from Mus musculus (Mouse).